The following is a 310-amino-acid chain: Tagatose-6-phosphate kinase (310 aa).

It belongs to the carbohydrate kinase PfkB family. LacC subfamily.

It catalyses the reaction D-tagatofuranose 6-phosphate + ATP = D-tagatofuranose 1,6-bisphosphate + ADP + H(+). Its pathway is carbohydrate metabolism; D-tagatose 6-phosphate degradation; D-glyceraldehyde 3-phosphate and glycerone phosphate from D-tagatose 6-phosphate: step 1/2. The chain is Tagatose-6-phosphate kinase from Staphylococcus epidermidis (strain ATCC 35984 / DSM 28319 / BCRC 17069 / CCUG 31568 / BM 3577 / RP62A).